A 251-amino-acid chain; its full sequence is NADPH-dependent oxidoreductase (251 aa).

The protein belongs to the flavin oxidoreductase frp family. FMN serves as cofactor.

In terms of biological role, reduces FMN, organic nitro compounds and disulfide DTNB. Involved in maintenance of the cellular redox state and the disulfide stress response. The protein is NADPH-dependent oxidoreductase (nfrA) of Staphylococcus aureus (strain Mu50 / ATCC 700699).